Reading from the N-terminus, the 716-residue chain is Beta-1,2-glucosyltransferase (716 aa).

Positions 52, 99, 101, 102, 175, 176, 278, 279, 343, and 349 each coordinate sophorose. The Proton donor/acceptor role is filled by Glu-176. 3 residues coordinate beta-D-glucose: Glu-176, Gly-278, and Trp-279. Catalysis depends on Glu-343, which acts as the Nucleophile. Beta-D-glucose-binding residues include Arg-349, Lys-358, and Glu-361. Tyr-378 contacts sophorose. 2 residues coordinate beta-D-glucose: Ser-708 and Tyr-709.

This sequence belongs to the glycosyl hydrolase 35 family. In terms of assembly, homidimer.

It is found in the cytoplasm. It catalyses the reaction a D-glucoside + [(1-&gt;2)-beta-D-glucosyl](n) = a beta-D-glucosyl-(1-&gt;2)-D-glucoside + [(1-&gt;2)-beta-D-glucosyl](n-1). Functionally, glycosyltransferase acting on beta-1,2-glucooligosaccharides. Catalyzes the transfer of a glucosyl residue from the non-reducing end of a 1,2-beta-D-glucan to a glucose residue of an acceptor molecule, forming a beta-1,2-glucosidic bond. The beta-1,2-linked glucose dimer sophorose is the preferred donor in vitro. Has a very broad specificity for the acceptor and can act on various aryl- and alkyl-glucosides. Does not show any hydrolytic activity. The protein is Beta-1,2-glucosyltransferase of Ignavibacterium album (strain DSM 19864 / JCM 16511 / NBRC 101810 / Mat9-16).